We begin with the raw amino-acid sequence, 3483 residues long: Nonribosomal peptide synthetase Ao415 (3483 aa).

The interval 281-669 (TFKKLNETSN…DVHPLIKDVV (389 aa)) is adenylation 1. In terms of domain architecture, Carrier 1 spans 775–851 (EVFDELSTKI…GLRDHVSGKK (77 aa)). The residue at position 812 (S812) is an O-(pantetheine 4'-phosphoryl)serine. The segment at 886 to 1297 (ANVLPCSPMQ…YCLLHMLQNQ (412 aa)) is condensation 1. The interval 1363 to 1758 (TYRQFDDMGN…SADKDVAEIV (396 aa)) is adenylation 2. Positions 1865–1941 (EELSETEKVI…SLAKALSSAN (77 aa)) constitute a Carrier 2 domain. S1901 carries the post-translational modification O-(pantetheine 4'-phosphoryl)serine. The segment at 1981–2379 (IKPCTPLQEG…LLKNPEQEVA (399 aa)) is condensation 2. One can recognise a Carrier 3 domain in the interval 2412 to 2485 (TEAAVSIRRE…RMVVYLSSTK (74 aa)). S2446 carries the post-translational modification O-(pantetheine 4'-phosphoryl)serine. The segment at 2520-2917 (ESILPTTPLQ…MLQKIIGNPL (398 aa)) is condensation 3. The Carrier 4 domain occupies 2954–3030 (DNYQNLERQV…KICLFLDKKQ (77 aa)). S2991 carries the post-translational modification O-(pantetheine 4'-phosphoryl)serine. Positions 3084 to 3368 (SEGRIFLPTF…VQEDLLKIST (285 aa)) are condensation 4.

Belongs to the NRP synthetase family.

Its pathway is siderophore biosynthesis. Nonribosomal peptide synthetase; part of the gene cluster that mediates the biosynthesis of desferriferrichrome that chelates Fe(3+) to form ferrichrome. Fe(3+) is a key factor for induction of trap formation and the fungus uses the iron chelating desferriferrichrome to sequester Fe(3+) to inhibit trap formation and increase nematicidal activity. The biosynthesis of desferriferrichrome requires the action of the L-ornithine N(5)-oxygenase (LOO) Ao414 that hydroxylates L-ornithine at N(5), resulting in the formation of N(5)-hydroxyl-L-ornithine, which is subsequently N-acetylated to yield N(5)-acetyl-N(5)-hydroxy-L-ornithine (L-AHO). L-AHO harbors one hydroxamate moiety, which is the key core responsible for chelating iron. Then, L-AHO is further condensated with glycines to form desferriferrichrome through the NRPS protein Ao415. In Arthrobotrys oligospora (strain ATCC 24927 / CBS 115.81 / DSM 1491) (Nematode-trapping fungus), this protein is Nonribosomal peptide synthetase Ao415.